The sequence spans 79 residues: Peptide Im-5 (79 aa).

The N-terminal stretch at 1-23 (MKYRKQLLVLFFAYFLVVNESEA) is a signal peptide. Positions 49 to 79 (RALMKRDLQDRMDPYQRNLKLDRYLKQLALD) are excised as a propeptide.

Belongs to the non-disulfide-bridged peptide (NDBP) superfamily. Medium-length antimicrobial peptide (group 3) family. As to expression, expressed by the venom gland.

It localises to the secreted. The protein localises to the target cell membrane. Its function is as follows. Antimicrobial peptide that may act by disrupting the integrity of the bacterial cell membrane. Has antibacterial activity against Gram-negative bacterium E.coli NBRC 3972 (MIC=10 uM) and against Gram-positive bacteria S.aureus NBRC 13276 (MIC=2.5-5 uM) and B.subtilis NBRC 3009 (MIC=0.5-1 uM). Also shows potent activity against antibiotic-sensitive and -resistant Acinetobacter baumannii (MIC=1.8-3.6 uM). Shows cytolytic activity against human and sheep erythrocytes. Toxic to cricket A.domestica. The polypeptide is Peptide Im-5 (Isometrus maculatus (Lesser brown scorpion)).